Consider the following 133-residue polypeptide: Ribosome-binding factor A (133 aa).

It belongs to the RbfA family. In terms of assembly, monomer. Binds 30S ribosomal subunits, but not 50S ribosomal subunits or 70S ribosomes.

It is found in the cytoplasm. Functionally, one of several proteins that assist in the late maturation steps of the functional core of the 30S ribosomal subunit. Associates with free 30S ribosomal subunits (but not with 30S subunits that are part of 70S ribosomes or polysomes). Required for efficient processing of 16S rRNA. May interact with the 5'-terminal helix region of 16S rRNA. This chain is Ribosome-binding factor A, found in Synechocystis sp. (strain ATCC 27184 / PCC 6803 / Kazusa).